The chain runs to 581 residues: 2-succinyl-5-enolpyruvyl-6-hydroxy-3-cyclohexene-1-carboxylate synthase (581 aa).

Belongs to the TPP enzyme family. MenD subfamily. In terms of assembly, homodimer. Requires Mg(2+) as cofactor. It depends on Mn(2+) as a cofactor. Thiamine diphosphate is required as a cofactor.

It carries out the reaction isochorismate + 2-oxoglutarate + H(+) = 5-enolpyruvoyl-6-hydroxy-2-succinyl-cyclohex-3-ene-1-carboxylate + CO2. It functions in the pathway quinol/quinone metabolism; 1,4-dihydroxy-2-naphthoate biosynthesis; 1,4-dihydroxy-2-naphthoate from chorismate: step 2/7. The protein operates within quinol/quinone metabolism; menaquinone biosynthesis. Its function is as follows. Catalyzes the thiamine diphosphate-dependent decarboxylation of 2-oxoglutarate and the subsequent addition of the resulting succinic semialdehyde-thiamine pyrophosphate anion to isochorismate to yield 2-succinyl-5-enolpyruvyl-6-hydroxy-3-cyclohexene-1-carboxylate (SEPHCHC). This chain is 2-succinyl-5-enolpyruvyl-6-hydroxy-3-cyclohexene-1-carboxylate synthase, found in Chlorobium phaeobacteroides (strain BS1).